We begin with the raw amino-acid sequence, 347 residues long: Beta-hexosaminidase (347 aa).

Substrate contacts are provided by residues aspartate 62, arginine 70, arginine 134, and 164 to 165 (KH). Residue histidine 177 is the Proton donor/acceptor of the active site. The active-site Nucleophile is aspartate 249.

This sequence belongs to the glycosyl hydrolase 3 family. NagZ subfamily.

The protein localises to the cytoplasm. The catalysed reaction is Hydrolysis of terminal non-reducing N-acetyl-D-hexosamine residues in N-acetyl-beta-D-hexosaminides.. It participates in cell wall biogenesis; peptidoglycan recycling. Functionally, plays a role in peptidoglycan recycling by cleaving the terminal beta-1,4-linked N-acetylglucosamine (GlcNAc) from peptide-linked peptidoglycan fragments, giving rise to free GlcNAc, anhydro-N-acetylmuramic acid and anhydro-N-acetylmuramic acid-linked peptides. The protein is Beta-hexosaminidase of Mannheimia succiniciproducens (strain KCTC 0769BP / MBEL55E).